Consider the following 393-residue polypeptide: Xylose transport system permease protein XylH (393 aa).

At Met1–Ser24 the chain is on the periplasmic side. Residues Leu25–Trp45 traverse the membrane as a helical segment. Residues Thr46–Thr64 lie on the Cytoplasmic side of the membrane. The helical transmembrane segment at Ala65–Leu85 threads the bilayer. Residues Ser86 to Asp102 are Periplasmic-facing. Residues Val103–Leu123 form a helical membrane-spanning segment. Topologically, residues Gly124 to Lys135 are cytoplasmic. The helical transmembrane segment at Val136–Ile156 threads the bilayer. The Periplasmic portion of the chain corresponds to Thr157–Ser175. The helical transmembrane segment at Tyr176 to Trp196 threads the bilayer. At Gln197–Ser214 the chain is on the cytoplasmic side. The helical transmembrane segment at Thr215–Leu235 threads the bilayer. At Asn236–Arg239 the chain is on the periplasmic side. Residues Gly240–Thr260 traverse the membrane as a helical segment. Topologically, residues Arg261 to Arg287 are cytoplasmic. Residues Thr288–Ser308 form a helical membrane-spanning segment. At Ser309–Gly312 the chain is on the periplasmic side. A helical membrane pass occupies residues Ala313–Gly333. Topologically, residues Gly334 to Ser336 are cytoplasmic. A helical membrane pass occupies residues Leu337–Leu357. Over Asp358–Asp365 the chain is Periplasmic. A helical transmembrane segment spans residues Val366 to Asp386. The Cytoplasmic portion of the chain corresponds to Ser387 to Ser393.

This sequence belongs to the binding-protein-dependent transport system permease family. AraH/RbsC subfamily.

It localises to the cell inner membrane. Its function is as follows. Part of the binding-protein-dependent transport system for D-xylose. Probably responsible for the translocation of the substrate across the membrane. This is Xylose transport system permease protein XylH (xylH) from Escherichia coli O6:H1 (strain CFT073 / ATCC 700928 / UPEC).